Here is a 374-residue protein sequence, read N- to C-terminus: Chaperone protein DnaJ (374 aa).

Residues 5–70 form the J domain; the sequence is DYYEVLGVSK…QKRAAYDQYG (66 aa). The CR-type zinc finger occupies 132 to 210; that stretch reads GTTVKIRVPT…CHGHGRVEET (79 aa). Positions 145, 148, 162, 165, 184, 187, 198, and 201 each coordinate Zn(2+). 4 CXXCXGXG motif repeats span residues 145–152, 162–169, 184–191, and 198–205; these read CKPCGGSG, CTTCGGHG, CPNCRGQG, and CKECHGHG.

It belongs to the DnaJ family. In terms of assembly, homodimer. It depends on Zn(2+) as a cofactor.

The protein resides in the cytoplasm. Participates actively in the response to hyperosmotic and heat shock by preventing the aggregation of stress-denatured proteins and by disaggregating proteins, also in an autonomous, DnaK-independent fashion. Unfolded proteins bind initially to DnaJ; upon interaction with the DnaJ-bound protein, DnaK hydrolyzes its bound ATP, resulting in the formation of a stable complex. GrpE releases ADP from DnaK; ATP binding to DnaK triggers the release of the substrate protein, thus completing the reaction cycle. Several rounds of ATP-dependent interactions between DnaJ, DnaK and GrpE are required for fully efficient folding. Also involved, together with DnaK and GrpE, in the DNA replication of plasmids through activation of initiation proteins. This chain is Chaperone protein DnaJ, found in Saccharophagus degradans (strain 2-40 / ATCC 43961 / DSM 17024).